The chain runs to 182 residues: Ribosome maturation factor RimM (182 aa).

Residues 103-182 (EDDYYWKDLM…RVEVDWDPGF (80 aa)) form the PRC barrel domain.

It belongs to the RimM family. In terms of assembly, binds ribosomal protein uS19.

It localises to the cytoplasm. An accessory protein needed during the final step in the assembly of 30S ribosomal subunit, possibly for assembly of the head region. Essential for efficient processing of 16S rRNA. May be needed both before and after RbfA during the maturation of 16S rRNA. It has affinity for free ribosomal 30S subunits but not for 70S ribosomes. This chain is Ribosome maturation factor RimM, found in Yersinia pestis (strain Pestoides F).